Consider the following 1113-residue polypeptide: MLKTLLFILIFFNIPIIAIEEIPDIKENGEKSSYTQFDNGAKLEVNKEHKRVIKIGHIGAVGVMPNDARILNISKENLIEEGLVGDDIEFEIVSRQACSESFEGVAVAAELYHVHQVRAFIGPYCAAELEAVTKMATFWNIPIISYSSVPNAVSDRSVYKTLARVSSKNTNSIAEATVALLLHYKWLKVAIATNTGSTAFERVSIFEEIMHREGVTIVKKVMFDENTDANEMMNSGQLGDLAANARIIICLFSSTKELSKEFMQATYTMRMNNAEYAYIIPWLQSGTKDLTPWIGADGEMLQRVKDHYANAIIVDDVNGFDDSVVSSFVEKIEKHGMQKSDIDVTNINGYLHLFDSLKLYALAIRKVLNETDNEAYVTNGQFIWNRMRRMKFEGVVSRSSSEENKDAGAIGTVLMDDVADRAPIFSAFYISPNRDKVMKMVNMESELISNCDGLKNKSGCFQLKINDIKSGFWPSEDGSMPLDEPICGYRGQRCSYLLEISVGSLIILLILISVVFFFLFRYCENKQLEKMPWRIFHDDLQFIDEEQVKSMMSVGSVTTKLSNIQTGQKQHAIIGVNTHTTYHRYKQRRPIKFIKEDMQLLTQMKQAVHDNLNPFLGAAFNEKEEMLVLWKFCSRGTIQDIIYNANVVLDEKFHGAFVRDITLGLEYLHASPIGYHGSLTPWCCLIDRNWMVKLSDYGIANPLERWEKQGAIEIAAAKDSDDKSQASQATSIIYMAPELLKNRETNKRRGMDQSWVKQSMLRRQAGDIYSFGMVMYEILFRSLPFRDNTNISELVDYLADGSKTVSPEIQNQMGLHPDLNALLRDCWSENPEIRPSIRRVRLNTEMVLKTKGSLVDQMMKMMEQYANNLEKLVAERTGMLEEANIRADQLLTQLLPAYVANELKMGRSVAPKLYSSATILFSDIVGFTTICSGSTPLEVVNMLNGLYTGFDECITRNKSYKVETIGDAYMVVSGIPEENEYNHSRNIANTALDMRQYLTGYQIPHRPTHRVRCRWGFHTGSVAAGVVGLTCPRYCLFGDTVNVSSRMESTGTPGMIQMSEEAHMHIRAHHPVFTTTERGEVQVKGKGTCRTFWLEDRVGDASTTNYIQNVEGV.

Positions 1-18 (MLKTLLFILIFFNIPIIA) are cleaved as a signal peptide. The Extracellular segment spans residues 19-499 (IEEIPDIKEN…RGQRCSYLLE (481 aa)). N-linked (GlcNAc...) asparagine glycans are attached at residues Asn-72, Asn-369, and Asn-456. Residues 500 to 520 (ISVGSLIILLILISVVFFFLF) traverse the membrane as a helical segment. Residues 521-1113 (RYCENKQLEK…TNYIQNVEGV (593 aa)) lie on the Cytoplasmic side of the membrane. Positions 543-848 (IDEEQVKSMM…RVRLNTEMVL (306 aa)) constitute a Protein kinase domain. The stretch at 853–884 (SLVDQMMKMMEQYANNLEKLVAERTGMLEEAN) forms a coiled coil. Residues 918 to 1048 (TILFSDIVGF…DTVNVSSRME (131 aa)) form the Guanylate cyclase domain. Mg(2+)-binding residues include Asp-923, Ile-924, and Asp-967.

Belongs to the adenylyl cyclase class-4/guanylyl cyclase family. As to expression, expressed specifically in AFD sensory neurons.

It is found in the cell membrane. The protein localises to the cell projection. Its subcellular location is the cilium. It carries out the reaction GTP = 3',5'-cyclic GMP + diphosphate. Guanylate cyclase involved in the production of the second messenger cGMP. Regulates thermotaxis responses in AFD sensory neurons. May regulate AFD neuronal activity such as calcium responses to temperature gradients. The sequence is that of Receptor-type guanylate cyclase gcy-18 from Caenorhabditis elegans.